Reading from the N-terminus, the 476-residue chain is Angiotensinogen (476 aa).

An N-terminal signal peptide occupies residues 1–24 (MAPAGMSLRATILCLLAWAGLAAG). N-linked (GlcNAc...) asparagine glycans are attached at residues N38, N161, N295, and N319. C42 and C162 are joined by a disulfide.

This sequence belongs to the serpin family. In terms of processing, in response to low blood pressure, the enzyme renin/REN cleaves angiotensinogen to produce angiotensin-1. Angiotensin-1 is a substrate of ACE (angiotensin converting enzyme) that removes a dipeptide to yield the physiologically active peptide angiotensin-2. Angiotensin-1 and angiotensin-2 can be further processed to generate angiotensin-3, angiotensin-4. Angiotensin 1-9 is cleaved from angiotensin-1 by ACE2 and can be further processed by ACE to produce angiotensin 1-7, angiotensin 1-5 and angiotensin 1-4. Angiotensin 1-7 has also been proposed to be cleaved from angiotensin-2 by ACE2 or from angiotensin-1 by MME (neprilysin). The disulfide bond is labile. Angiotensinogen is present in the circulation in a near 40:60 ratio with the oxidized disulfide-bonded form, which preferentially interacts with receptor-bound renin.

The protein resides in the secreted. Its function is as follows. Essential component of the renin-angiotensin system (RAS), a potent regulator of blood pressure, body fluid and electrolyte homeostasis. In terms of biological role, acts directly on vascular smooth muscle as a potent vasoconstrictor, affects cardiac contractility and heart rate through its action on the sympathetic nervous system, and alters renal sodium and water absorption through its ability to stimulate the zona glomerulosa cells of the adrenal cortex to synthesize and secrete aldosterone. Acts by binding to angiotensin receptors AGTR1 and AGTR2. Also binds the DEAR/FBXW7-AS1 receptor. Functionally, stimulates aldosterone release. Is a ligand for the G-protein coupled receptor MAS1. Has vasodilator and antidiuretic effects. Has an antithrombotic effect that involves MAS1-mediated release of nitric oxide from platelets. The protein is Angiotensinogen (AGT) of Gorilla gorilla gorilla (Western lowland gorilla).